The following is a 113-amino-acid chain: Coat protein TP1 (113 aa).

The protein localises to the virion. This chain is Coat protein TP1, found in Thermoproteus tenax virus 1 (strain KRA1) (TTV1).